The following is a 213-amino-acid chain: StAR-related lipid transfer protein 5 (213 aa).

The START domain maps to 1-213 (MDPSWATQES…LQKAVRKFHH (213 aa)).

As to expression, expressed in most tissues, with highest levels in liver and in kidney.

In terms of biological role, may be involved in the intracellular transport of sterols or other lipids. May bind cholesterol or other sterols. This chain is StAR-related lipid transfer protein 5 (Stard5), found in Mus musculus (Mouse).